A 526-amino-acid chain; its full sequence is Dual specificity tyrosine-phosphorylation-regulated kinase 2 (526 aa).

Composition is skewed to polar residues over residues 30 to 40 and 60 to 70; these read TTQPNGLTTLG and GSSSSLKSTDG. The segment at 30–76 is disordered; the sequence is TTQPNGLTTLGKSGLPVVQDRQSESAHRRQGSSSSLKSTDGTGKVKA. Residue Thr-31 is modified to Phosphothreonine; by ATM. Positions 114–116 match the Nuclear localization signal motif; that stretch reads KKR. The region spanning 147–460 is the Protein kinase domain; the sequence is YEVLKVIGKG…PSQALRHPWL (314 aa). ATP-binding positions include 153–161, Lys-176, and 226–229; these read IGKGSFGQV and FELL. Asp-273 (proton acceptor) is an active-site residue. Tyr-307 is subject to Phosphotyrosine. The residue at position 367 (Ser-367) is a Phosphoserine; by ATM. Positions 462–499 are disordered; it reads RRLPKPPTGEKASAKRITESTGAITSISKLPPTSSSAS. Residues 480-499 are compositionally biased toward polar residues; it reads ESTGAITSISKLPPTSSSAS.

Belongs to the protein kinase superfamily. CMGC Ser/Thr protein kinase family. MNB/DYRK subfamily. Interacts with MDM2. It depends on Mg(2+) as a cofactor. Mn(2+) serves as cofactor. In terms of processing, phosphorylated on serine/threonine residues. Phosphorylation on Thr-31 and Ser-367 by ATM in response to genotoxic stress disrupts MDM2 binding and prevents MDM2-mediated ubiquitination and subsequent proteasome degradation, thus promoting p53/TP53-mediated apoptosis. Post-translationally, ubiquitination in nucleus by MDM2 in normal conditions leads to proteasome degradation.

Its subcellular location is the cytoplasm. The protein resides in the nucleus. The catalysed reaction is L-seryl-[protein] + ATP = O-phospho-L-seryl-[protein] + ADP + H(+). The enzyme catalyses L-threonyl-[protein] + ATP = O-phospho-L-threonyl-[protein] + ADP + H(+). It carries out the reaction L-tyrosyl-[protein] + ATP = O-phospho-L-tyrosyl-[protein] + ADP + H(+). With respect to regulation, autophosphorylates on tyrosine residues. Its function is as follows. Serine/threonine-protein kinase involved in the control of mitotic transition and the regulation of cellular growth and/or development. In Gallus gallus (Chicken), this protein is Dual specificity tyrosine-phosphorylation-regulated kinase 2.